A 349-amino-acid chain; its full sequence is N-acetyl-gamma-glutamyl-phosphate reductase (349 aa).

Residue Cys153 is part of the active site.

Belongs to the NAGSA dehydrogenase family. Type 1 subfamily.

It is found in the cytoplasm. It carries out the reaction N-acetyl-L-glutamate 5-semialdehyde + phosphate + NADP(+) = N-acetyl-L-glutamyl 5-phosphate + NADPH + H(+). Its pathway is amino-acid biosynthesis; L-arginine biosynthesis; N(2)-acetyl-L-ornithine from L-glutamate: step 3/4. Catalyzes the NADPH-dependent reduction of N-acetyl-5-glutamyl phosphate to yield N-acetyl-L-glutamate 5-semialdehyde. The polypeptide is N-acetyl-gamma-glutamyl-phosphate reductase (Magnetococcus marinus (strain ATCC BAA-1437 / JCM 17883 / MC-1)).